The following is a 57-amino-acid chain: Large ribosomal subunit protein bL32c (57 aa).

Belongs to the bacterial ribosomal protein bL32 family.

Its subcellular location is the plastid. The protein localises to the chloroplast. The chain is Large ribosomal subunit protein bL32c from Phalaenopsis aphrodite subsp. formosana (Moth orchid).